A 153-amino-acid chain; its full sequence is Protein SprT-like (153 aa).

Residues 6–148 enclose the SprT-like domain; it reads LQQLTEQLSL…CGKCGGKIKE (143 aa). Residue histidine 67 participates in Zn(2+) binding. Glutamate 68 is an active-site residue. Residue histidine 71 coordinates Zn(2+).

This sequence belongs to the SprT family. Zn(2+) serves as cofactor.

The protein resides in the cytoplasm. The sequence is that of Protein SprT-like from Bacillus licheniformis (strain ATCC 14580 / DSM 13 / JCM 2505 / CCUG 7422 / NBRC 12200 / NCIMB 9375 / NCTC 10341 / NRRL NRS-1264 / Gibson 46).